A 130-amino-acid chain; its full sequence is Protein ApaG (130 aa).

An ApaG domain is found at 3 to 127 (STITRDIQIT…FSLDSPFSRQ (125 aa)).

The sequence is that of Protein ApaG from Beijerinckia indica subsp. indica (strain ATCC 9039 / DSM 1715 / NCIMB 8712).